We begin with the raw amino-acid sequence, 180 residues long: Signal peptidase complex subunit 3 (180 aa).

Over 1–12 (MHNLLSRANSLL) the chain is Cytoplasmic. The chain crosses the membrane as a helical; Signal-anchor for type II membrane protein span at residues 13-33 (AFTLWVMAAVTAACFLSTVFL). Residues 34–180 (DYTVSNHLEV…PTTYTTTRRS (147 aa)) lie on the Lumenal side of the membrane. Asn-141 carries an N-linked (GlcNAc...) asparagine glycan.

The protein belongs to the SPCS3 family. Component of the signal peptidase complex (SPC) composed of a catalytic subunit sec-11 and three accessory subunits spcs-1, spcs-2 and spcs-3. The complex induces a local thinning of the ER membrane which is used to measure the length of the signal peptide (SP) h-region of protein substrates. This ensures the selectivity of the complex towards h-regions shorter than 18-20 amino acids.

It localises to the endoplasmic reticulum membrane. Its function is as follows. Essential component of the signal peptidase complex (SPC) which catalyzes the cleavage of N-terminal signal sequences from nascent proteins as they are translocated into the lumen of the endoplasmic reticulum. Essential for the SPC catalytic activity, possibly by stabilizing and positioning the active center of the complex close to the lumenal surface. This is Signal peptidase complex subunit 3 from Caenorhabditis briggsae.